Reading from the N-terminus, the 68-residue chain is Small integral membrane protein 10-like protein 1 (68 aa).

The tract at residues 1-21 (MAPAAAPSSLAVRASSPAATP) is disordered.

The sequence is that of Small integral membrane protein 10-like protein 1 from Homo sapiens (Human).